Reading from the N-terminus, the 178-residue chain is uncharacterized protein (178 aa).

Residues 1–89 (MSAKEGSSHP…GEKKGKTEKL (89 aa)) are disordered. Composition is skewed to basic and acidic residues over residues 44–53 (PYQKNEKVVV) and 61–89 (AFLH…TEKL).

This is an uncharacterized protein from Schizosaccharomyces pombe (strain 972 / ATCC 24843) (Fission yeast).